A 616-amino-acid chain; its full sequence is Sulfite reductase [NADPH] flavoprotein alpha-component (616 aa).

A Flavodoxin-like domain is found at leucine 80 to leucine 218. FMN is bound by residues serine 86–alanine 91, serine 133–glycine 136, and leucine 169–cysteine 178. Residues glutamine 251 to proline 465 form the FAD-binding FR-type domain. Residues threonine 339, glycine 373, arginine 403 to serine 406, threonine 421 to glycine 423, tyrosine 427, and glycine 436 to serine 439 contribute to the FAD site. NADP(+)-binding positions include serine 536–arginine 537, lysine 542–glutamine 546, and aspartate 578. Tyrosine 616 provides a ligand contact to FAD.

Belongs to the NADPH-dependent sulphite reductase flavoprotein subunit CysJ family. The protein in the N-terminal section; belongs to the flavodoxin family. It in the C-terminal section; belongs to the flavoprotein pyridine nucleotide cytochrome reductase family. Alpha(8)-beta(8). The alpha component is a flavoprotein, the beta component is a hemoprotein. FAD is required as a cofactor. Requires FMN as cofactor.

It catalyses the reaction hydrogen sulfide + 3 NADP(+) + 3 H2O = sulfite + 3 NADPH + 4 H(+). The protein operates within sulfur metabolism; hydrogen sulfide biosynthesis; hydrogen sulfide from sulfite (NADPH route): step 1/1. In terms of biological role, component of the sulfite reductase complex that catalyzes the 6-electron reduction of sulfite to sulfide. This is one of several activities required for the biosynthesis of L-cysteine from sulfate. The flavoprotein component catalyzes the electron flow from NADPH -&gt; FAD -&gt; FMN to the hemoprotein component. The sequence is that of Sulfite reductase [NADPH] flavoprotein alpha-component from Vibrio vulnificus (strain CMCP6).